The chain runs to 49 residues: Large ribosomal subunit protein bL33B (49 aa).

The protein belongs to the bacterial ribosomal protein bL33 family.

This is Large ribosomal subunit protein bL33B from Bacillus velezensis (strain DSM 23117 / BGSC 10A6 / LMG 26770 / FZB42) (Bacillus amyloliquefaciens subsp. plantarum).